The primary structure comprises 734 residues: Polyphosphate kinase (734 aa).

Asn67 provides a ligand contact to ATP. Residues Arg392 and Arg422 each contribute to the Mg(2+) site. Positions 447–481 (THLKTHSKIALVVKRINNELTSFVHLGTGNYNDKT) constitute a PLD phosphodiesterase domain. His452 serves as the catalytic Phosphohistidine intermediate. Residues Tyr485, Arg581, and His609 each coordinate ATP. Residues 705–734 (KKQSVQPSGQPVHSRRGGSWMRKLKNTFKR) form a disordered region.

The protein belongs to the polyphosphate kinase 1 (PPK1) family. It depends on Mg(2+) as a cofactor. Post-translationally, an intermediate of this reaction is the autophosphorylated ppk in which a phosphate is covalently linked to a histidine residue through a N-P bond.

It carries out the reaction [phosphate](n) + ATP = [phosphate](n+1) + ADP. In terms of biological role, catalyzes the reversible transfer of the terminal phosphate of ATP to form a long-chain polyphosphate (polyP). This Staphylococcus epidermidis (strain ATCC 12228 / FDA PCI 1200) protein is Polyphosphate kinase.